A 383-amino-acid chain; its full sequence is UDP-N-acetylenolpyruvoylglucosamine reductase (383 aa).

Residues 1 to 13 (MRTRRDVPADRSG) are compositionally biased toward basic and acidic residues. The segment at 1–26 (MRTRRDVPADRSGRSRVSRHPGLSVP) is disordered. An FAD-binding PCMH-type domain is found at 49–215 (LGGPATRLLT…LRVRFELENA (167 aa)). Arg-192 is an active-site residue. The active-site Proton donor is the Ser-271. Glu-375 is a catalytic residue.

This sequence belongs to the MurB family. It depends on FAD as a cofactor.

The protein resides in the cytoplasm. It carries out the reaction UDP-N-acetyl-alpha-D-muramate + NADP(+) = UDP-N-acetyl-3-O-(1-carboxyvinyl)-alpha-D-glucosamine + NADPH + H(+). Its pathway is cell wall biogenesis; peptidoglycan biosynthesis. Functionally, cell wall formation. This is UDP-N-acetylenolpyruvoylglucosamine reductase from Streptomyces coelicolor (strain ATCC BAA-471 / A3(2) / M145).